A 214-amino-acid chain; its full sequence is Putative pyrophosphatase PpaX (214 aa).

The active-site Nucleophile is D8.

It belongs to the HAD-like hydrolase superfamily. PpaX family. Mg(2+) serves as cofactor.

It carries out the reaction diphosphate + H2O = 2 phosphate + H(+). The protein is Putative pyrophosphatase PpaX of Clostridium perfringens (strain 13 / Type A).